We begin with the raw amino-acid sequence, 839 residues long: DNA (cytosine-5)-methyltransferase CMT3 (839 aa).

2 disordered regions span residues 1 to 38 and 51 to 86; these read MAPKRKRPATKDDTTKSIPKPKKRAPKRAKTVKEEPVT and LDEPIPESEAKSTWPDRYKPIEVQPPKASSRKKTKD. Residues 19–30 are compositionally biased toward basic residues; that stretch reads PKPKKRAPKRAK. Residues 51–70 are compositionally biased toward basic and acidic residues; it reads LDEPIPESEAKSTWPDRYKP. In terms of domain architecture, BAH spans 108–227; the sequence is QIYELNDDAY…LPYDTFEAIQ (120 aa). One can recognise an SAM-dependent MTase C5-type domain in the interval 269-813; sequence ATLLDLYSGC…YALGTAFQGL (545 aa). Positions 382–447 constitute a Chromo domain; the sequence is FTVDKIVGIS…LGYKSGILPL (66 aa). The active site involves cysteine 460.

This sequence belongs to the class I-like SAM-binding methyltransferase superfamily. C5-methyltransferase family. In terms of assembly, homodimer. Interacts with HP1 and, through its chromodomain, with the N-terminal tail of histone H3 doubly methylated at 'Lys-9' and 'Lys-27'. Binds to JMJ24. Ubiquitinated by JMJ24, subsequently beingargeted to proteasomal degradation thus initiating the destabilization of the heterochromatic state of endogenous silenced loci.

It localises to the nucleus. It carries out the reaction a 2'-deoxycytidine in DNA + S-adenosyl-L-methionine = a 5-methyl-2'-deoxycytidine in DNA + S-adenosyl-L-homocysteine + H(+). Functionally, involved in the CpXpG methylation (e.g. CHG cytosine) and in gene silencing. Methylates preferentially transposon-related sequences. Functionally redundant to DRM1/DRM2 to maintain non-CpG methylation. Involved in RNA-directed DNA methylation. This is DNA (cytosine-5)-methyltransferase CMT3 from Arabidopsis thaliana (Mouse-ear cress).